The primary structure comprises 109 residues: Nucleoid-associated protein NT01EI_1109 (109 aa).

The tract at residues 89–109 is disordered; it reads KERMASVSSGMQLPPGFKMPF.

The protein belongs to the YbaB/EbfC family. In terms of assembly, homodimer.

Its subcellular location is the cytoplasm. The protein localises to the nucleoid. Binds to DNA and alters its conformation. May be involved in regulation of gene expression, nucleoid organization and DNA protection. The chain is Nucleoid-associated protein NT01EI_1109 from Edwardsiella ictaluri (strain 93-146).